The primary structure comprises 133 residues: Ribonuclease P protein component (133 aa).

Belongs to the RnpA family. As to quaternary structure, consists of a catalytic RNA component (M1 or rnpB) and a protein subunit.

The enzyme catalyses Endonucleolytic cleavage of RNA, removing 5'-extranucleotides from tRNA precursor.. Functionally, RNaseP catalyzes the removal of the 5'-leader sequence from pre-tRNA to produce the mature 5'-terminus. It can also cleave other RNA substrates such as 4.5S RNA. The protein component plays an auxiliary but essential role in vivo by binding to the 5'-leader sequence and broadening the substrate specificity of the ribozyme. The polypeptide is Ribonuclease P protein component (Pseudomonas fluorescens (strain Pf0-1)).